Here is a 42-residue protein sequence, read N- to C-terminus: Photosystem I reaction center subunit IX (42 aa).

Residues 7 to 27 form a helical membrane-spanning segment; that stretch reads YLSAAPVLSTLWLGALAALLI.

The protein belongs to the PsaJ family.

It localises to the plastid membrane. May help in the organization of the PsaE and PsaF subunits. This is Photosystem I reaction center subunit IX from Cuscuta reflexa (Southern Asian dodder).